A 482-amino-acid polypeptide reads, in one-letter code: tRNA sulfurtransferase (482 aa).

The region spanning 61–165 (LAIRDALTRI…DDRLLLIKGR (105 aa)) is the THUMP domain. ATP contacts are provided by residues 183–184 (LI), Lys265, Gly287, and Gln296. Cysteines 344 and 456 form a disulfide. Residues 404-482 (FGPNDVILDI…GFNNVKVYRP (79 aa)) enclose the Rhodanese domain. Residue Cys456 is the Cysteine persulfide intermediate of the active site.

The protein belongs to the ThiI family.

It is found in the cytoplasm. It catalyses the reaction [ThiI sulfur-carrier protein]-S-sulfanyl-L-cysteine + a uridine in tRNA + 2 reduced [2Fe-2S]-[ferredoxin] + ATP + H(+) = [ThiI sulfur-carrier protein]-L-cysteine + a 4-thiouridine in tRNA + 2 oxidized [2Fe-2S]-[ferredoxin] + AMP + diphosphate. The enzyme catalyses [ThiS sulfur-carrier protein]-C-terminal Gly-Gly-AMP + S-sulfanyl-L-cysteinyl-[cysteine desulfurase] + AH2 = [ThiS sulfur-carrier protein]-C-terminal-Gly-aminoethanethioate + L-cysteinyl-[cysteine desulfurase] + A + AMP + 2 H(+). Its pathway is cofactor biosynthesis; thiamine diphosphate biosynthesis. In terms of biological role, catalyzes the ATP-dependent transfer of a sulfur to tRNA to produce 4-thiouridine in position 8 of tRNAs, which functions as a near-UV photosensor. Also catalyzes the transfer of sulfur to the sulfur carrier protein ThiS, forming ThiS-thiocarboxylate. This is a step in the synthesis of thiazole, in the thiamine biosynthesis pathway. The sulfur is donated as persulfide by IscS. This chain is tRNA sulfurtransferase, found in Escherichia coli O9:H4 (strain HS).